Consider the following 162-residue polypeptide: Phosphopantetheine adenylyltransferase (162 aa).

Substrate is bound at residue Thr14. Residues 14–15 (TF) and His22 contribute to the ATP site. Positions 46, 78, and 92 each coordinate substrate. ATP contacts are provided by residues 93 to 95 (GLR), Glu103, and 128 to 134 (HSFISSS).

Belongs to the bacterial CoaD family. Homohexamer. Mg(2+) is required as a cofactor.

Its subcellular location is the cytoplasm. It carries out the reaction (R)-4'-phosphopantetheine + ATP + H(+) = 3'-dephospho-CoA + diphosphate. The protein operates within cofactor biosynthesis; coenzyme A biosynthesis; CoA from (R)-pantothenate: step 4/5. Functionally, reversibly transfers an adenylyl group from ATP to 4'-phosphopantetheine, yielding dephospho-CoA (dPCoA) and pyrophosphate. This is Phosphopantetheine adenylyltransferase from Xylella fastidiosa (strain M23).